The chain runs to 307 residues: 1-aminocyclopropane-1-carboxylate oxidase 5 (307 aa).

Residues 106-134 are a coiled coil; the sequence is SNIKETMGEYREEVRKLASKMMEVMDENL. One can recognise a Fe2OG dioxygenase domain in the interval 152–256; sequence GEETAFFGTK…RRSIASFYNP (105 aa). Fe cation contacts are provided by His180, Asp182, and His237. Residue Arg247 coordinates 2-oxoglutarate.

This sequence belongs to the iron/ascorbate-dependent oxidoreductase family. Fe(2+) is required as a cofactor.

The catalysed reaction is 1-aminocyclopropane-1-carboxylate + L-ascorbate + O2 = ethene + L-dehydroascorbate + hydrogen cyanide + CO2 + 2 H2O. It functions in the pathway alkene biosynthesis; ethylene biosynthesis via S-adenosyl-L-methionine; ethylene from S-adenosyl-L-methionine: step 2/2. Enzyme involved in the ethylene biosynthesis. The protein is 1-aminocyclopropane-1-carboxylate oxidase 5 of Arabidopsis thaliana (Mouse-ear cress).